A 415-amino-acid polypeptide reads, in one-letter code: FXa-directed anticoagulant (415 aa).

Residues 1–17 form the signal peptide; that stretch reads MYLKIVILVTFPLVCFT. 4 N-linked (GlcNAc...) asparagine glycosylation sites follow: N117, N166, N216, and N320.

This sequence belongs to the serpin family. (Microbial infection) Interacts with Zika virus envelope protein E and Zika virus-like particles; the interaction does not affect Zika virus replication in human endothelial cells and keratinocytes. In terms of processing, the N-terminus is blocked. In terms of tissue distribution, female salivary gland (at protein level). Not detected in female carcass without head and salivary glands. Not detected in male tissues.

The protein localises to the secreted. Functionally, anticoagulant serpin-type protein inhibiting host coagulation factor Xa (F10). Does not inhibit host thrombin (F2) and trypsin. In terms of biological role, (Microbial infection) Does not affect Zika virus replication in human endothelial cells and keratinocytes. The protein is FXa-directed anticoagulant of Aedes aegypti (Yellowfever mosquito).